A 130-amino-acid chain; its full sequence is Histone H2A type 2 (130 aa).

The disordered stretch occupies residues 1–22; the sequence is MSGRGKQGGKTRAKSKTRSSRA. At Ser-2 the chain carries N-acetylserine. A Phosphoserine modification is found at Ser-2. Lys-6 carries the post-translational modification N6-(2-hydroxyisobutyryl)lysine. Lys-6 bears the N6-acetyllysine mark. Residues 7–19 are compositionally biased toward basic residues; that stretch reads QGGKTRAKSKTRS. An N6-(2-hydroxyisobutyryl)lysine; alternate modification is found at Lys-10. N6-lactoyllysine; alternate is present on Lys-10. An N6-succinyllysine modification is found at Lys-10. Glycyl lysine isopeptide (Lys-Gly) (interchain with G-Cter in ubiquitin) cross-links involve residues Lys-14 and Lys-16. The residue at position 37 (Lys-37) is an N6-(2-hydroxyisobutyryl)lysine; alternate. An N6-(2-hydroxyisobutyryl)lysine modification is found at Lys-76. Lys-96 bears the N6-(2-hydroxyisobutyryl)lysine; alternate mark. N6-succinyllysine is present on Lys-96. Position 96 is an N6-glutaryllysine; alternate (Lys-96). Position 105 is an N5-methylglutamine (Gln-105). N6-(2-hydroxyisobutyryl)lysine; alternate is present on Lys-119. Residue Lys-119 is modified to N6-glutaryllysine; alternate. A Glycyl lysine isopeptide (Lys-Gly) (interchain with G-Cter in ubiquitin) cross-link involves residue Lys-120.

It belongs to the histone H2A family. The nucleosome is a histone octamer containing two molecules each of H2A, H2B, H3 and H4 assembled in one H3-H4 heterotetramer and two H2A-H2B heterodimers. The octamer wraps approximately 147 bp of DNA. In terms of processing, monoubiquitination of Lys-120 (H2AK119Ub) gives a specific tag for epigenetic transcriptional repression. Following DNA double-strand breaks (DSBs), it is ubiquitinated through 'Lys-63' linkage of ubiquitin moieties, leading to the recruitment of repair proteins to sites of DNA damage. H2AK119Ub and ionizing radiation-induced 'Lys-63'-linked ubiquitination are distinct events. Phosphorylation on Ser-2 is enhanced during mitosis. Phosphorylation on Ser-2 directly represses transcription. Post-translationally, glutamine methylation at Gln-105 (H2AQ104me) by FBL is specifically dedicated to polymerase I. It is present at 35S ribosomal DNA locus and impairs binding of the FACT complex.

Its subcellular location is the nucleus. It localises to the chromosome. Functionally, core component of nucleosome. Nucleosomes wrap and compact DNA into chromatin, limiting DNA accessibility to the cellular machineries which require DNA as a template. Histones thereby play a central role in transcription regulation, DNA repair, DNA replication and chromosomal stability. DNA accessibility is regulated via a complex set of post-translational modifications of histones, also called histone code, and nucleosome remodeling. This chain is Histone H2A type 2, found in Xenopus laevis (African clawed frog).